A 108-amino-acid chain; its full sequence is Glutaredoxin-C10 (108 aa).

The 107-residue stretch at 1–107 (MERVAKLASE…PMLKNAGALW (107 aa)) folds into the Glutaredoxin domain. Cysteines 21 and 24 form a disulfide. The short motif at 105–108 (ALWL) is the Responsive for interaction with TGA factors element.

The protein belongs to the glutaredoxin family. CC-type subfamily.

The protein resides in the cytoplasm. It is found in the nucleus. Functionally, has a glutathione-disulfide oxidoreductase activity in the presence of NADPH and glutathione reductase. Reduces low molecular weight disulfides and proteins. In Oryza sativa subsp. japonica (Rice), this protein is Glutaredoxin-C10 (GRXC10).